Here is a 690-residue protein sequence, read N- to C-terminus: Protein arginine N-methyltransferase 7 (690 aa).

SAM-dependent MTase PRMT-type domains follow at residues Gln-14 to Trp-357 and Thr-366 to Leu-690.

It belongs to the class I-like SAM-binding methyltransferase superfamily. Protein arginine N-methyltransferase family. PRMT7 subfamily.

Essential arginine methyltransferase that can both catalyze the formation of omega-N monomethylarginine (MMA) and symmetrical dimethylarginine (sDMA). Specifically mediates the symmetrical dimethylation of arginine residues in the small nuclear ribonucleoproteins SmD1 and SmD3. The sequence is that of Protein arginine N-methyltransferase 7 (Art7) from Drosophila sechellia (Fruit fly).